Reading from the N-terminus, the 362-residue chain is E3 ubiquitin-protein ligase TM129 (362 aa).

Topologically, residues 1 to 6 are lumenal; the sequence is MDSPEV. A helical transmembrane segment spans residues 7–27; that stretch reads TFTLAYLVFAVCFVFTPNEFH. At 28-56 the chain is on the cytoplasmic side; it reads AAGLTVQNLLSGWLGSEDAAFVPFHLRRT. A helical transmembrane segment spans residues 57-77; the sequence is AATLLCHSLLPLGYYVGMCLA. Residues 78–94 lie on the Lumenal side of the membrane; sequence ASEKRLHALSQAPEAWR. Residues 95 to 115 traverse the membrane as a helical segment; sequence LFLLLAVTLPSIACILIYYWS. The Cytoplasmic segment spans residues 116-362; the sequence is RDRWACHPLA…FCILDVCTVR (247 aa). The RING-type; degenerate zinc-finger motif lies at 285 to 350; sequence CIGCMQTRAS…ASRVPCPTCR (66 aa).

Belongs to the TMEM129 family. Integral component of ER-resident dislocation complexes.

Its subcellular location is the endoplasmic reticulum membrane. It carries out the reaction S-ubiquitinyl-[E2 ubiquitin-conjugating enzyme]-L-cysteine + [acceptor protein]-L-lysine = [E2 ubiquitin-conjugating enzyme]-L-cysteine + N(6)-ubiquitinyl-[acceptor protein]-L-lysine.. The protein operates within protein modification; protein ubiquitination. In terms of biological role, E3 ubiquitin-protein ligase involved in ER-associated protein degradation, preferentially associates with the E2 enzyme UBE2J2. Exploited by viral US11 proteins to mediate HLA class I proteins degradation. This Homo sapiens (Human) protein is E3 ubiquitin-protein ligase TM129 (TMEM129).